The chain runs to 390 residues: GLH-binding kinase 1 (390 aa).

A Protein kinase domain is found at 38–338; sequence YVNLSFLNAG…VEDALNHPYV (301 aa). ATP-binding positions include 44 to 52 and lysine 67; that span reads LNAGAQGTV. Catalysis depends on aspartate 164, which acts as the Proton acceptor. Serine 198 bears the Phosphoserine mark. The residue at position 200 (tyrosine 200) is a Phosphotyrosine.

The protein belongs to the protein kinase superfamily. CMGC Ser/Thr protein kinase family. MAP kinase subfamily. As to quaternary structure, interacts with glh-1, glh-2 (via C-terminus), glh-3 (via C-terminus) and glh-4 (via C-terminus). Interacts with csn-5; the interaction may prevent glh-1 degradation induced by kgb-1. Interacts with fos-1. It depends on Mg(2+) as a cofactor. Post-translationally, may be phosphorylated by mek-1 on Ser-198 and/or Tyr-200. Phosphorylation is induced upon Cu(2+) and arsenite-mediated cell stimulation and by fasting. In terms of tissue distribution, expressed in somatic and germline tissues.

The protein localises to the cytoplasm. The enzyme catalyses L-seryl-[protein] + ATP = O-phospho-L-seryl-[protein] + ADP + H(+). The catalysed reaction is L-threonyl-[protein] + ATP = O-phospho-L-threonyl-[protein] + ADP + H(+). With respect to regulation, activated by mek-1 mediated phosphorylation. No differences in basal activation between larvae and adults. Inhibited by phosphatase vhp-1. Functionally, mitogen-activated protein kinase which is an essential component of the JNK pathway composed of mlk-1, mek-1 and kgb-1. Phosphorylates the transcription factor fos-1 which prevents fos-1 dimerization and promoter binding and results in activation of target genes including F53A9.2/kreg-1 and lys-3/kreg-2. Phosphorylates jun-1 and activates the AP-1 transcription factor which is a heterodimer of jun-1 and fos-1. Phosphorylates glh-1 in vitro which may play a role in controlling glh-1 protein levels in the germline by targeting it for degradation by the proteasome. Required for oogenesis and probably also for spermatogenesis. Involved in the response to environmental stress such as heavy metals, infection and protein folding stress in an age-dependent manner. In larvae, has a protective role which becomes detrimental in adults. May control susceptibility to infection, heavy metal stress and premature lethality by regulating daf-16 cellular localization. Involved in the transcriptional response to bacterial pore-forming toxins and to fasting. Required for fasting-induced longevity. Involved in axon regeneration after injury downstream of tyrosine receptor svh-2. The sequence is that of GLH-binding kinase 1 from Caenorhabditis elegans.